The primary structure comprises 131 residues: Cytochrome b5 (131 aa).

Positions alanine 3 to aspartate 79 constitute a Cytochrome b5 heme-binding domain. Positions 38 and 62 each coordinate heme. A helical membrane pass occupies residues isoleucine 108–isoleucine 125.

The protein belongs to the cytochrome b5 family.

Its subcellular location is the endoplasmic reticulum membrane. It is found in the microsome membrane. Its function is as follows. Membrane bound hemoprotein which function as an electron carrier for several membrane bound oxygenases. In Rhizopus stolonifer (Rhizopus nigricans), this protein is Cytochrome b5.